Here is a 469-residue protein sequence, read N- to C-terminus: UDP-N-acetylmuramate--L-alanine ligase (469 aa).

122–128 (GTHGKTT) contacts ATP.

This sequence belongs to the MurCDEF family.

The protein localises to the cytoplasm. The catalysed reaction is UDP-N-acetyl-alpha-D-muramate + L-alanine + ATP = UDP-N-acetyl-alpha-D-muramoyl-L-alanine + ADP + phosphate + H(+). It functions in the pathway cell wall biogenesis; peptidoglycan biosynthesis. In terms of biological role, cell wall formation. This Legionella pneumophila (strain Lens) protein is UDP-N-acetylmuramate--L-alanine ligase.